The primary structure comprises 235 residues: Lipoprotein-releasing system ATP-binding protein LolD 1 (235 aa).

One can recognise an ABC transporter domain in the interval 5–234 (FEARGITKSY…DGRLQLCTPL (230 aa)). 42-49 (GASGSGKT) is a binding site for ATP.

Belongs to the ABC transporter superfamily. Lipoprotein translocase (TC 3.A.1.125) family. As to quaternary structure, the complex is composed of two ATP-binding proteins (LolD) and two transmembrane proteins (LolC and LolE).

The protein localises to the cell inner membrane. Functionally, part of the ABC transporter complex LolCDE involved in the translocation of mature outer membrane-directed lipoproteins, from the inner membrane to the periplasmic chaperone, LolA. Responsible for the formation of the LolA-lipoprotein complex in an ATP-dependent manner. The sequence is that of Lipoprotein-releasing system ATP-binding protein LolD 1 from Chlorobium luteolum (strain DSM 273 / BCRC 81028 / 2530) (Pelodictyon luteolum).